Consider the following 210-residue polypeptide: ATP phosphoribosyltransferase (210 aa).

It belongs to the ATP phosphoribosyltransferase family. Short subfamily. In terms of assembly, heteromultimer composed of HisG and HisZ subunits.

It localises to the cytoplasm. It carries out the reaction 1-(5-phospho-beta-D-ribosyl)-ATP + diphosphate = 5-phospho-alpha-D-ribose 1-diphosphate + ATP. It functions in the pathway amino-acid biosynthesis; L-histidine biosynthesis; L-histidine from 5-phospho-alpha-D-ribose 1-diphosphate: step 1/9. Its function is as follows. Catalyzes the condensation of ATP and 5-phosphoribose 1-diphosphate to form N'-(5'-phosphoribosyl)-ATP (PR-ATP). Has a crucial role in the pathway because the rate of histidine biosynthesis seems to be controlled primarily by regulation of HisG enzymatic activity. This is ATP phosphoribosyltransferase from Caldanaerobacter subterraneus subsp. tengcongensis (strain DSM 15242 / JCM 11007 / NBRC 100824 / MB4) (Thermoanaerobacter tengcongensis).